A 376-amino-acid chain; its full sequence is Cyclin-D3-1 (376 aa).

A disordered region spans residues 298–376 (KRKSHDSSSS…HLPWAIVATP (79 aa)). The segment covering 321-349 (NSDESSNDSWSASSCNPPTSSSSPQQQPP) has biased composition (low complexity). Residues 354 to 363 (RGAEENEKKK) show a composition bias toward basic and acidic residues.

The protein belongs to the cyclin family. Cyclin D subfamily. As to quaternary structure, interacts with the C-terminal domain of CDKA-1. Interacts with KRP1/ICK1. Interacts with KRP6. Post-translationally, phosphorylated. Highly expressed in roots and at lower levels in leaves and flowers. Expressed in vegetative shoot meristem and inflorescence.

Its function is as follows. Involved in the control of the cell cycle at the G1/S (start) transition. Activates the G1/S phase transition in response to cytokinin hormone signal, but declines in response to sucrose starvation leading to G1 arrest. Involved in the induction of mitotic cell division. Plays an important role in the switch from cell proliferation to the final stages of differentiation during plant development. May not be involved in the activation of cell cycle in the root apical meristem (RAM) in the early phase of seed germination. Promotes divisions in the guard cells (GCs) after the guard mother cells (GMC) symmetric division. The protein is Cyclin-D3-1 (CYCD3-1) of Arabidopsis thaliana (Mouse-ear cress).